The primary structure comprises 265 residues: GTP cyclohydrolase FolE2 (265 aa).

Belongs to the GTP cyclohydrolase IV family.

The enzyme catalyses GTP + H2O = 7,8-dihydroneopterin 3'-triphosphate + formate + H(+). It functions in the pathway cofactor biosynthesis; 7,8-dihydroneopterin triphosphate biosynthesis; 7,8-dihydroneopterin triphosphate from GTP: step 1/1. In terms of biological role, converts GTP to 7,8-dihydroneopterin triphosphate. The sequence is that of GTP cyclohydrolase FolE2 from Bordetella bronchiseptica (strain ATCC BAA-588 / NCTC 13252 / RB50) (Alcaligenes bronchisepticus).